Consider the following 537-residue polypeptide: uncharacterized protein (537 aa).

Transmembrane regions (helical) follow at residues isoleucine 5–valine 25, leucine 40–tryptophan 60, valine 63–valine 83, glycine 115–glycine 135, valine 149–leucine 169, and valine 197–isoleucine 217.

It is found in the plastid. It localises to the chloroplast membrane. This is an uncharacterized protein from Ostreococcus tauri.